The following is a 363-amino-acid chain: Zinc phosphodiesterase ELAC protein 1 (363 aa).

His62, His64, Asp66, His67, His182, Asp253, and His313 together coordinate Zn(2+). Residue Asp66 is the Proton acceptor of the active site.

This sequence belongs to the RNase Z family. In terms of assembly, homodimer. The cofactor is Zn(2+).

It localises to the cytoplasm. It is found in the cytosol. Its subcellular location is the nucleus. The enzyme catalyses Endonucleolytic cleavage of RNA, removing extra 3' nucleotides from tRNA precursor, generating 3' termini of tRNAs. A 3'-hydroxy group is left at the tRNA terminus and a 5'-phosphoryl group is left at the trailer molecule.. Functionally, zinc phosphodiesterase, which displays some tRNA 3'-processing endonuclease activity. Specifically involved in tRNA repair: acts downstream of the ribosome-associated quality control (RQC) pathway by removing a 2',3'-cyclic phosphate from tRNAs following cleavage by ANKZF1. tRNAs are then processed by TRNT1. The sequence is that of Zinc phosphodiesterase ELAC protein 1 (ELAC1) from Bos taurus (Bovine).